The sequence spans 825 residues: NT-3 growth factor receptor (825 aa).

A signal peptide spans 1 to 31; that stretch reads MDVSLCPAKCSFWRIFLLGSVWLDYVGSVLA. 2 disulfide bridges follow: Cys32/Cys38 and Cys36/Cys45. Over 32-429 the chain is Extracellular; sequence CPANCVCSKT…TVTHKPEEDT (398 aa). 3 N-linked (GlcNAc...) asparagine glycosylation sites follow: Asn68, Asn72, and Asn79. LRR repeat units lie at residues 104–125 and 128–149; these read GLQK…AFAK and HLRY…LFQT. 2 N-linked (GlcNAc...) asparagine glycosylation sites follow: Asn133 and Asn163. Residues 160-209 enclose the LRRCT domain; sequence NFFNCSCDIRWMQLWQEQGEAKLNSQNLYCINTDGSQLPLFRMNISQCDL. Disulfide bonds link Cys164–Cys189 and Cys166–Cys207. 7 N-linked (GlcNAc...) asparagine glycosylation sites follow: Asn203, Asn218, Asn232, Asn259, Asn267, Asn272, and Asn294. Ig-like C2-type domains are found at residues 210 to 300 and 309 to 382; these read PEIS…VALT and SLEE…IAKN. Cys231 and Cys284 are oxidised to a cystine. Cys320 and Cys362 are joined by a disulfide. 2 N-linked (GlcNAc...) asparagine glycosylation sites follow: Asn375 and Asn388. Residues 430–453 traverse the membrane as a helical segment; that stretch reads FGVSIAVGLAAFACVLLVVLFVMI. Topologically, residues 454–825 are cytoplasmic; sequence NKYGRRSKFG…ATPIYLDILG (372 aa). Ser493 carries the post-translational modification Phosphoserine. The residue at position 516 (Tyr516) is a Phosphotyrosine; by autocatalysis. The Protein kinase domain occupies 538 to 825; it reads IVLKRELGEG…ATPIYLDILG (288 aa). Residues 544–552 and Lys572 contribute to the ATP site; that span reads LGEGAFGKV. Catalysis depends on Asp679, which acts as the Proton acceptor. Tyr705, Tyr709, and Tyr710 each carry phosphotyrosine; by autocatalysis.

It belongs to the protein kinase superfamily. Tyr protein kinase family. Insulin receptor subfamily. As to quaternary structure, exists in a dynamic equilibrium between monomeric (low affinity) and dimeric (high affinity) structures. Binds SH2B2. Interacts with SQSTM1 and KIDINS220. Interacts with PTPRS. Interacts with MAPK8IP3/JIP3. In terms of processing, ligand-mediated auto-phosphorylation.

Its subcellular location is the membrane. The catalysed reaction is L-tyrosyl-[protein] + ATP = O-phospho-L-tyrosyl-[protein] + ADP + H(+). Its function is as follows. Receptor tyrosine kinase involved in nervous system and probably heart development. Upon binding of its ligand NTF3/neurotrophin-3, NTRK3 autophosphorylates and activates different signaling pathways, including the phosphatidylinositol 3-kinase/AKT and the MAPK pathways, that control cell survival and differentiation. This Pan troglodytes (Chimpanzee) protein is NT-3 growth factor receptor (NTRK3).